Consider the following 126-residue polypeptide: RuBisCO chaperone RbcX (126 aa).

It belongs to the RbcX family. Homodimer. Interacts with the exposed C-terminal peptide of RbcL via its central cleft, contacts a second RbcL monomer via its peripheral polar surface.

The protein localises to the carboxysome. It localises to the cytoplasm. In terms of biological role, an RbcL-specific chaperone. Required for assembly of the RbcL8 core. The central cleft of the RbcX homodimer (RbcX2) binds the C-terminus of a RbcL monomer, stabilizing the C-terminus and probably preventing its reassociation with chaperonin GroEL-ES. At the same time the peripheral region of RbcX2 binds a second RbcL monomer, bridging the RbcL homodimers in the correct orientation. The RbcX2(2)-bound RbcL dimers then assemble into the RbcL8 core (RbcL8-(RbcX2)8). RbcS binding triggers the release of RbcX2. This chain is RuBisCO chaperone RbcX, found in Thermosynechococcus vestitus (strain NIES-2133 / IAM M-273 / BP-1).